The following is a 369-amino-acid chain: Protein VP6 (369 aa).

Disordered stretches follow at residues 17–169 (KREL…LQGR) and 184–208 (LDRI…GGDR). The segment covering 29–68 (LREKGSTEAKSKLKEDGEKKNKSEKEENKIHDDRRVESQK) has biased composition (basic and acidic residues). The span at 92–111 (TGGGDGSAGARTGIGGGGVG) shows a compositional bias: gly residues. 2 stretches are compositionally biased toward basic and acidic residues: residues 137-148 (TGADRVANDDAT) and 196-208 (TEGE…GGDR).

Belongs to the orbivirus VP6 family.

The protein localises to the virion. In African horse sickness virus (AHSV), this protein is Protein VP6 (Segment-9).